The sequence spans 303 residues: Di/tripeptide transport system permease protein DppC (303 aa).

7 consecutive transmembrane segments (helical) span residues 33 to 53, 103 to 123, 131 to 151, 152 to 172, 202 to 222, 225 to 245, and 267 to 287; these read ALGG…APWV, LLIG…LGLL, AGPL…LLLA, VAIV…IAIV, AGTL…PLIV, TLSF…GLGV, and WWVV…INLM. Residues 99-288 form the ABC transmembrane type-1 domain; that stretch reads ARLSLLIGLS…LSVLAINLMG (190 aa).

This sequence belongs to the binding-protein-dependent transport system permease family. OppBC subfamily. As to quaternary structure, the complex is composed of two ATP-binding proteins (DppD and DppF), two transmembrane proteins (DppB and DppC) and a solute-binding protein (DppA1-A5). Five orthologous SBPs (DppA1-A5) are present in P.aeruginosa, which increases the substrate specificity of the DppBCDF transporter.

It is found in the cell inner membrane. Its function is as follows. Part of the ABC transporter DppABCDF involved in the uptake of various di/tripeptides. Is also involved in the uptake of phaseolotoxin, a toxic tripeptide inhibiting the enzyme ornithine carbamoyltransferase. Responsible for the translocation of the substrate across the membrane. This is Di/tripeptide transport system permease protein DppC from Pseudomonas aeruginosa (strain UCBPP-PA14).